A 704-amino-acid chain; its full sequence is Penicillin-binding protein H (704 aa).

A helical membrane pass occupies residues 23–43; sequence FFLAVFVLFTALIFKLGVVQI. A disordered region spans residues 197–223; the sequence is MNPNKSNSNGKNGALLDEKKNSSQRPK. Low complexity predominate over residues 200 to 209; sequence NKSNSNGKNG. Positions 212–223 are enriched in basic and acidic residues; that stretch reads LDEKKNSSQRPK. Ser415 (acyl-ester intermediate) is an active-site residue.

Belongs to the transpeptidase family.

The protein localises to the cell membrane. It carries out the reaction Preferential cleavage: (Ac)2-L-Lys-D-Ala-|-D-Ala. Also transpeptidation of peptidyl-alanyl moieties that are N-acyl substituents of D-alanine.. Its pathway is cell wall biogenesis; peptidoglycan biosynthesis. Its function is as follows. Involved in the polymerization of peptidoglycan. Plays a redundant role with PBP-2A (pbpA) in determining the rod shape of the cell during vegetative growth and spore outgrowth. In Bacillus subtilis (strain 168), this protein is Penicillin-binding protein H.